A 146-amino-acid chain; its full sequence is Leptin (146 aa).

A disulfide bridge links cysteine 96 with cysteine 146.

Belongs to the leptin family.

The protein localises to the secreted. Functionally, key player in the regulation of energy balance and body weight control. Once released into the circulation, has central and peripheral effects by binding LEPR, found in many tissues, which results in the activation of several major signaling pathways. In the hypothalamus, acts as an appetite-regulating factor that induces a decrease in food intake and an increase in energy consumption by inducing anorexinogenic factors and suppressing orexigenic neuropeptides, also regulates bone mass and secretion of hypothalamo-pituitary-adrenal hormones. In the periphery, increases basal metabolism, influences reproductive function, regulates pancreatic beta-cell function and insulin secretion, is pro-angiogenic for endothelial cell and affects innate and adaptive immunity. In the arcuate nucleus of the hypothalamus, activates by depolarization POMC neurons inducing FOS and SOCS3 expression to release anorexigenic peptides and inhibits by hyperpolarization NPY neurons inducing SOCS3 with a consequent reduction on release of orexigenic peptides. In addition to its known satiety inducing effect, has a modulatory role in nutrient absorption. In the intestine, reduces glucose absorption by enterocytes by activating PKC and leading to a sequential activation of p38, PI3K and ERK signaling pathways which exerts an inhibitory effect on glucose absorption. Acts as a growth factor on certain tissues, through the activation of different signaling pathways increases expression of genes involved in cell cycle regulation such as CCND1, via JAK2-STAT3 pathway, or VEGFA, via MAPK1/3 and PI3K-AKT1 pathways. May also play an apoptotic role via JAK2-STAT3 pathway and up-regulation of BIRC5 expression. Pro-angiogenic, has mitogenic activity on vascular endothelial cells and plays a role in matrix remodeling by regulating the expression of matrix metalloproteinases (MMPs) and tissue inhibitors of metalloproteinases (TIMPs). In innate immunity, modulates the activity and function of neutrophils by increasing chemotaxis and the secretion of oxygen radicals. Increases phagocytosis by macrophages and enhances secretion of pro-inflammatory mediators. Increases cytotoxic ability of NK cells. Plays a pro-inflammatory role, in synergy with IL1B, by inducing NOS2 which promotes the production of IL6, IL8 and Prostaglandin E2, through a signaling pathway that involves JAK2, PI3K, MAP2K1/MEK1 and MAPK14/p38. In adaptive immunity, promotes the switch of memory T-cells towards T helper-1 cell immune responses. Increases CD4(+)CD25(-) T-cell proliferation and reduces autophagy during TCR (T-cell receptor) stimulation, through MTOR signaling pathway activation and BCL2 up-regulation. The sequence is that of Leptin (LEP) from Pongo pygmaeus (Bornean orangutan).